The primary structure comprises 792 residues: Phenylalanine--tRNA ligase beta subunit (792 aa).

The 109-residue stretch at 39–147 (GEALDLIVVA…DDAPIGTPLA (109 aa)) folds into the tRNA-binding domain. The region spanning 400–475 (PAPASILLRR…RIRGYEHLPT (76 aa)) is the B5 domain. Mg(2+)-binding residues include Asp453, Asp459, Glu462, and Glu463. An FDX-ACB domain is found at 698–791 (SRFPFVRRDL…IQQRHDVRIR (94 aa)).

Belongs to the phenylalanyl-tRNA synthetase beta subunit family. Type 1 subfamily. Tetramer of two alpha and two beta subunits. It depends on Mg(2+) as a cofactor.

It is found in the cytoplasm. The enzyme catalyses tRNA(Phe) + L-phenylalanine + ATP = L-phenylalanyl-tRNA(Phe) + AMP + diphosphate + H(+). This Xylella fastidiosa (strain 9a5c) protein is Phenylalanine--tRNA ligase beta subunit (pheT).